A 600-amino-acid chain; its full sequence is MCGIVGYIGNEDAKEILLSGLEKLEYRGYDSAGIAVRTESDTEVFKEKGRIATLRKAVDENVHSTVGIGHTRWATHGVPSQLNAHPHQSATERYTLVHNGVIENYEQIKRDYLADVQLKSDTDTEVIVQFIEQLAGEGLTTEEAVSKALSLMKGSYAIALLDKDDPDTIFVGKNKSPLLVGVGENANVVASDAMAMLTVTDQFIEIMDEELVIVRRDRIEIKTLAGDVQERKPYTAELDVSDIEKGTYAHFMLKEIDEQPFVIRNIIQKYQHEDGSTRLDEDIRAAMKDSDRIYIVAAGTSYHAGLVGKQLLERVSGKPTEVHIASEFLYNMPLLSEKPLFVFISQSGETADSRGVLVNVKKQGHRTLTITNVPGSTLSREADYTLHTFAGPEIAVASTKAYTAQIAVLALLAVDVANAAGKTLDFDLLQELAIAANAMESLCNQKDEMEQIARDYLSVTRNAFFIGRTADYFVALEGALKLKEISYIQAEGFAGGELKHGTIALIEDGTPVIALATQEHVNLSIRGNVQEVASRGAATAIISMEGLDQEGDAVVLPRVHELLTPLVSVIPTQLIAYYAALHRGCDVDKPRNLAKSVTVE.

The active-site Nucleophile; for GATase activity is C2. Positions 2-217 (CGIVGYIGNE…DEELVIVRRD (216 aa)) constitute a Glutamine amidotransferase type-2 domain. SIS domains are found at residues 283-422 (IRAA…AAGK) and 452-590 (IARD…VDKP). The For Fru-6P isomerization activity role is filled by K595.

As to quaternary structure, homodimer.

Its subcellular location is the cytoplasm. It catalyses the reaction D-fructose 6-phosphate + L-glutamine = D-glucosamine 6-phosphate + L-glutamate. In terms of biological role, catalyzes the first step in hexosamine metabolism, converting fructose-6P into glucosamine-6P using glutamine as a nitrogen source. In Shouchella clausii (strain KSM-K16) (Alkalihalobacillus clausii), this protein is Glutamine--fructose-6-phosphate aminotransferase [isomerizing].